A 463-amino-acid polypeptide reads, in one-letter code: Fumarate hydratase class II (463 aa).

Residues 98 to 100 (SGT), 129 to 132 (HPND), 139 to 141 (SSN), and Thr187 contribute to the substrate site. His188 acts as the Proton donor/acceptor in catalysis. Residue Ser318 is part of the active site. Substrate-binding positions include Ser319 and 324–326 (KVN).

This sequence belongs to the class-II fumarase/aspartase family. Fumarase subfamily. As to quaternary structure, homotetramer.

The protein localises to the cytoplasm. The enzyme catalyses (S)-malate = fumarate + H2O. It functions in the pathway carbohydrate metabolism; tricarboxylic acid cycle; (S)-malate from fumarate: step 1/1. Its function is as follows. Involved in the TCA cycle. Catalyzes the stereospecific interconversion of fumarate to L-malate. The polypeptide is Fumarate hydratase class II (Brucella melitensis biotype 1 (strain ATCC 23456 / CCUG 17765 / NCTC 10094 / 16M)).